The following is a 215-amino-acid chain: Pyridoxine/pyridoxamine 5'-phosphate oxidase (215 aa).

Residues 9-12 (RRDY) and Lys69 each bind substrate. Residues 64-69 (RVLLLK), 79-80 (FS), Lys86, and Gln108 contribute to the FMN site. Residues Tyr126, Arg130, and Ser134 each coordinate substrate. Residues 143–144 (QS) and Trp188 contribute to the FMN site. 194 to 196 (RLH) serves as a coordination point for substrate. Arg198 lines the FMN pocket.

It belongs to the pyridoxamine 5'-phosphate oxidase family. Homodimer. The cofactor is FMN.

The enzyme catalyses pyridoxamine 5'-phosphate + O2 + H2O = pyridoxal 5'-phosphate + H2O2 + NH4(+). It carries out the reaction pyridoxine 5'-phosphate + O2 = pyridoxal 5'-phosphate + H2O2. It functions in the pathway cofactor metabolism; pyridoxal 5'-phosphate salvage; pyridoxal 5'-phosphate from pyridoxamine 5'-phosphate: step 1/1. The protein operates within cofactor metabolism; pyridoxal 5'-phosphate salvage; pyridoxal 5'-phosphate from pyridoxine 5'-phosphate: step 1/1. Functionally, catalyzes the oxidation of either pyridoxine 5'-phosphate (PNP) or pyridoxamine 5'-phosphate (PMP) into pyridoxal 5'-phosphate (PLP). The protein is Pyridoxine/pyridoxamine 5'-phosphate oxidase of Ectopseudomonas mendocina (strain ymp) (Pseudomonas mendocina).